Reading from the N-terminus, the 309-residue chain is Tagatose-6-phosphate kinase (309 aa).

It belongs to the carbohydrate kinase PfkB family. LacC subfamily.

The catalysed reaction is D-tagatofuranose 6-phosphate + ATP = D-tagatofuranose 1,6-bisphosphate + ADP + H(+). It functions in the pathway carbohydrate metabolism; D-tagatose 6-phosphate degradation; D-glyceraldehyde 3-phosphate and glycerone phosphate from D-tagatose 6-phosphate: step 1/2. This chain is Tagatose-6-phosphate kinase, found in Streptococcus pyogenes serotype M4 (strain MGAS10750).